The chain runs to 508 residues: General transcription factor IIF subunit 1 (508 aa).

At Ala2 the chain carries N-acetylalanine. Thr156 bears the Phosphothreonine mark. The segment at 177–448 (MQQRRLKDQD…SSGDVQVTED (272 aa)) is disordered. Ser217, Ser218, Ser221, and Ser224 each carry phosphoserine. Over residues 232–251 (SKAKKKAPVTKAGRKKKKKK) the composition is skewed to basic residues. Acidic residues-rich tracts occupy residues 255 to 270 (DEAF…EGQE) and 303 to 325 (EQSE…EEEE). Thr331 bears the Phosphothreonine mark. Positions 343-355 (DDSDSSEESDIDS) are enriched in acidic residues. A compositionally biased stretch (basic residues) spans 364-374 (AKKKTPPKRER). Phosphoserine is present on residues Ser377, Ser380, Ser381, and Ser385. The segment covering 378 to 388 (GGSSKGTSRPG) has biased composition (polar residues). At Thr389 the chain carries Phosphothreonine. A compositionally biased stretch (low complexity) spans 389-406 (TPSAEAASTSSTLRAAAS). Ser391 carries the phosphoserine modification. N6-acetyllysine is present on Lys407. Residues 428–443 (GPQSLSGKSTPSSGDV) are compositionally biased toward polar residues. Residues Ser431, Ser433, and Ser436 each carry the phosphoserine modification. Position 437 is a phosphothreonine (Thr437). Ser440 carries the post-translational modification Phosphoserine.

It belongs to the TFIIF alpha subunit family. In terms of assembly, heterodimer of an alpha and a beta subunit. Interacts with GTF2F2, CTDP1, TAF6/TAFII80 and URI1. Interacts with GTF2B (via C-terminus and preferentially via acetylated form); this interaction prevents binding of GTF2B to GTF2F2. Part of TBP-based Pol II pre-initiation complex (PIC), in which Pol II core assembles with general transcription factors and other specific initiation factors including GTF2E1, GTF2E2, GTF2F1, GTF2F2, TCEA1, ERCC2, ERCC3, GTF2H2, GTF2H3, GTF2H4, GTF2H5, GTF2A1, GTF2A2, GTF2B and TBP; this large multi-subunit PIC complex mediates DNA unwinding and targets Pol II core to the transcription start site where the first phosphodiester bond forms. Post-translationally, phosphorylated on Ser and other residues by TAF1 and casein kinase II-like kinases.

Its subcellular location is the nucleus. Functionally, TFIIF is a general transcription initiation factor that binds to RNA polymerase II and helps to recruit it to the initiation complex in collaboration with TFIIB. It promotes transcription elongation. This chain is General transcription factor IIF subunit 1 (Gtf2f1), found in Rattus norvegicus (Rat).